Consider the following 837-residue polypeptide: Anaphase-promoting complex subunit 2 (837 aa).

A phosphoserine mark is found at S233, S329, S485, S549, and S712. The interval 478 to 508 (CLETGQDSEDDSGEPEDWVPDPVDADPVKSS) is disordered. The segment covering 483–496 (QDSEDDSGEPEDWV) has biased composition (acidic residues). A Phosphotyrosine modification is found at Y825.

The protein belongs to the cullin family. As to quaternary structure, the mammalian APC/C is composed at least of 14 distinct subunits ANAPC1, ANAPC2, CDC27/APC3, ANAPC4, ANAPC5, CDC16/APC6, ANAPC7, CDC23/APC8, ANAPC10, ANAPC11, CDC26/APC12, ANAPC13, ANAPC15 and ANAPC16 that assemble into a complex of at least 19 chains with a combined molecular mass of around 1.2 MDa; APC/C interacts with FZR1 and FBXO5. In the context of the APC/C complex, directly interacts with UBE2C and UBE2S. Interacts (via cullin domain) with ANAPC11 and with UBCH10. Interacts with NEUROD2. Interacts with FBXO43; the interaction is direct.

It participates in protein modification; protein ubiquitination. Its function is as follows. Together with the RING-H2 protein ANAPC11, constitutes the catalytic component of the anaphase promoting complex/cyclosome (APC/C), a cell cycle-regulated E3 ubiquitin ligase that controls progression through mitosis and the G1 phase of the cell cycle. The APC/C complex acts by mediating ubiquitination and subsequent degradation of target proteins: it mainly mediates the formation of 'Lys-11'-linked polyubiquitin chains and, to a lower extent, the formation of 'Lys-48'- and 'Lys-63'-linked polyubiquitin chains. The APC/C complex catalyzes assembly of branched 'Lys-11'-/'Lys-48'-linked branched ubiquitin chains on target proteins. The CDC20-APC/C complex positively regulates the formation of synaptic vesicle clustering at active zone to the presynaptic membrane in postmitotic neurons. CDC20-APC/C-induced degradation of NEUROD2 drives presynaptic differentiation. The chain is Anaphase-promoting complex subunit 2 (Anapc2) from Mus musculus (Mouse).